The primary structure comprises 127 residues: Large ribosomal subunit protein eL32 (127 aa).

Over residues 38–48 (WRRPKGIDSKM) the composition is skewed to basic and acidic residues. Residues 38–66 (WRRPKGIDSKMRLKKKGKPRSPSIGWSSP) form a disordered region.

The protein belongs to the eukaryotic ribosomal protein eL32 family.

The protein is Large ribosomal subunit protein eL32 of Thermococcus gammatolerans (strain DSM 15229 / JCM 11827 / EJ3).